We begin with the raw amino-acid sequence, 104 residues long: Type IV secretion system protein PtlB homolog (104 aa).

The chain crosses the membrane as a helical span at residues isoleucine 30–leucine 50.

Belongs to the virB3 family.

It is found in the cell membrane. The protein is Type IV secretion system protein PtlB homolog (ptlB) of Bordetella bronchiseptica (strain ATCC BAA-588 / NCTC 13252 / RB50) (Alcaligenes bronchisepticus).